The following is a 461-amino-acid chain: Cysteine--tRNA ligase (461 aa).

Zn(2+) is bound at residue Cys-30. Positions 32-42 (VTVYDLCHIGH) match the 'HIGH' region motif. Zn(2+) is bound by residues Cys-211, His-236, and Glu-240. The 'KMSKS' region motif lies at 268–272 (KMSKS). An ATP-binding site is contributed by Lys-271.

Belongs to the class-I aminoacyl-tRNA synthetase family. As to quaternary structure, monomer. Requires Zn(2+) as cofactor.

The protein localises to the cytoplasm. The catalysed reaction is tRNA(Cys) + L-cysteine + ATP = L-cysteinyl-tRNA(Cys) + AMP + diphosphate. This chain is Cysteine--tRNA ligase, found in Shewanella sp. (strain MR-4).